Here is a 275-residue protein sequence, read N- to C-terminus: Large ribosomal subunit protein uL2 (275 aa).

Residues 223–275 (VAMNPVDHPHGGGEGRTGEAREPVSPWGTPSKGFKTRRNKRTNNMIVQRRKRK) form a disordered region. The segment covering 229 to 244 (DHPHGGGEGRTGEARE) has biased composition (basic and acidic residues).

It belongs to the universal ribosomal protein uL2 family. In terms of assembly, part of the 50S ribosomal subunit. Forms a bridge to the 30S subunit in the 70S ribosome.

One of the primary rRNA binding proteins. Required for association of the 30S and 50S subunits to form the 70S ribosome, for tRNA binding and peptide bond formation. It has been suggested to have peptidyltransferase activity; this is somewhat controversial. Makes several contacts with the 16S rRNA in the 70S ribosome. This is Large ribosomal subunit protein uL2 from Bordetella petrii (strain ATCC BAA-461 / DSM 12804 / CCUG 43448).